We begin with the raw amino-acid sequence, 114 residues long: Nucleoid-associated protein MAE_23910 (114 aa).

The protein belongs to the YbaB/EbfC family. In terms of assembly, homodimer.

The protein localises to the cytoplasm. Its subcellular location is the nucleoid. Its function is as follows. Binds to DNA and alters its conformation. May be involved in regulation of gene expression, nucleoid organization and DNA protection. The sequence is that of Nucleoid-associated protein MAE_23910 from Microcystis aeruginosa (strain NIES-843 / IAM M-2473).